The chain runs to 432 residues: Amino-acid acetyltransferase (432 aa).

In terms of domain architecture, N-acetyltransferase spans 286–425 (EKLREATIED…ASLYNYQRQS (140 aa)).

It belongs to the acetyltransferase family. ArgA subfamily.

Its subcellular location is the cytoplasm. The enzyme catalyses L-glutamate + acetyl-CoA = N-acetyl-L-glutamate + CoA + H(+). The protein operates within amino-acid biosynthesis; L-arginine biosynthesis; N(2)-acetyl-L-ornithine from L-glutamate: step 1/4. In Azotobacter vinelandii (strain DJ / ATCC BAA-1303), this protein is Amino-acid acetyltransferase.